We begin with the raw amino-acid sequence, 400 residues long: Nicotinate phosphoribosyltransferase (400 aa).

A Phosphohistidine; by autocatalysis modification is found at His220.

The protein belongs to the NAPRTase family. In terms of processing, transiently phosphorylated on a His residue during the reaction cycle. Phosphorylation strongly increases the affinity for substrates and increases the rate of nicotinate D-ribonucleotide production. Dephosphorylation regenerates the low-affinity form of the enzyme, leading to product release.

It catalyses the reaction nicotinate + 5-phospho-alpha-D-ribose 1-diphosphate + ATP + H2O = nicotinate beta-D-ribonucleotide + ADP + phosphate + diphosphate. It functions in the pathway cofactor biosynthesis; NAD(+) biosynthesis; nicotinate D-ribonucleotide from nicotinate: step 1/1. Its function is as follows. Catalyzes the synthesis of beta-nicotinate D-ribonucleotide from nicotinate and 5-phospho-D-ribose 1-phosphate at the expense of ATP. This Escherichia coli O127:H6 (strain E2348/69 / EPEC) protein is Nicotinate phosphoribosyltransferase.